The primary structure comprises 660 residues: Putative ABC transporter ATP-binding MG390 homolog (660 aa).

The Peptidase C39 domain maps to 6 to 126 (QEQPNECGIC…KQWTGYAATV (121 aa)). The active site involves cysteine 12. The next 6 membrane-spanning stretches (helical) occupy residues 150–170 (LIIF…LLAT), 188–208 (IVVF…LYAL), 265–285 (HIPN…LIGI), 290–310 (FLWI…YDFF), 379–399 (SFAQ…GIIE), and 402–422 (YTLA…AYAT). Residues 464–660 (INLNNCSITL…INLSPYLQQT (197 aa)) enclose the ABC transporter domain. 494 to 501 (GENGSGKS) is an ATP binding site.

This sequence belongs to the ABC transporter superfamily.

The protein localises to the cell membrane. The chain is Putative ABC transporter ATP-binding MG390 homolog from Mycoplasma pneumoniae (strain ATCC 29342 / M129 / Subtype 1) (Mycoplasmoides pneumoniae).